The primary structure comprises 580 residues: Phosphatase and actin regulator 1 (580 aa).

Phosphoserine is present on residues S67 and S78. T104 carries the phosphothreonine modification. The Nuclear localization signal signature appears at 108-129 (RRRSKFANLGRIFKPWKWRKKK). An RPEL 1 repeat occupies 138–163 (AALERKISMRQSREELIKRGVLKEIY). Disordered stretches follow at residues 331 to 355 (EQRV…TKAG) and 376 to 410 (KENV…SSLY). Residues 335 to 345 (PCSTSYHSSGL) are compositionally biased toward polar residues. Positions 395 to 407 (EEEEEEEDEDDDS) are enriched in acidic residues. 3 RPEL repeats span residues 422-447 (DSLA…PRQT), 460-484 (TKLT…LKPR), and 498-523 (RRLT…IRFS). The segment at 462–494 (LTRRLSQRPTAEELEQRNILKPRNEQEEQEEKR) is disordered. Phosphoserine is present on S467. Positions 471 to 494 (TAEELEQRNILKPRNEQEEQEEKR) are enriched in basic and acidic residues. S505 is modified (phosphoserine).

Belongs to the phosphatase and actin regulator family. Interacts (via RPEL repeats) with ACTA1 and PPP1CA; ACTA1 and PPP1CA compete for the same binding site. In terms of tissue distribution, detected in umbilical vein endothelial cells.

The protein resides in the cytoplasm. The protein localises to the synapse. It is found in the nucleus. Functionally, binds actin monomers (G actin) and plays a role in multiple processes including the regulation of actin cytoskeleton dynamics, actin stress fibers formation, cell motility and survival, formation of tubules by endothelial cells, and regulation of PPP1CA activity. Involved in the regulation of cortical neuron migration and dendrite arborization. The sequence is that of Phosphatase and actin regulator 1 (PHACTR1) from Homo sapiens (Human).